The chain runs to 350 residues: Carbamoyl dehydratase HypE (350 aa).

Cysteine 350 bears the S-carbamoylcysteine mark. Cysteine 350 is subject to S-cyanocysteine.

Belongs to the HypE family. In terms of processing, modified by HypF, which adds a carboxamido group to the thiolate of the C-terminal cysteine, yielding a protein-S-carboxamide. The carboxamido group is then dehydrated by HypE itself to yield a protein-thiocyanate.

It catalyses the reaction C-terminal S-carboxamide-L-cysteinyl-[HypE protein] + ATP = C-terminal S-cyanate-L-cysteinyl-[HypE protein] + ADP + phosphate + H(+). It functions in the pathway protein modification; [NiFe] hydrogenase maturation. In terms of biological role, involved in the maturation of [NiFe] hydrogenases. Along with HypF, it catalyzes the synthesis of the CN ligands of the active site iron of [NiFe]-hydrogenases. HypE catalyzes the ATP-dependent dehydration of the carboxamido group attached to its C-terminal cysteine to a cyano group. This chain is Carbamoyl dehydratase HypE, found in Rhizobium leguminosarum bv. viciae.